The following is a 154-amino-acid chain: Superoxide dismutase [Cu-Zn] (154 aa).

The Cu cation site is built by histidine 47, histidine 49, and histidine 64. Cysteines 58 and 147 form a disulfide. The Zn(2+) site is built by histidine 64, histidine 72, histidine 81, and aspartate 84. Residue histidine 121 coordinates Cu cation. Residues 125–136 show a composition bias toward basic and acidic residues; that stretch reads DDLGKGGNEESL. The interval 125 to 144 is disordered; it reads DDLGKGGNEESLKTGNAGPR. Residue arginine 144 participates in substrate binding.

This sequence belongs to the Cu-Zn superoxide dismutase family. In terms of assembly, homodimer. Cu cation is required as a cofactor. It depends on Zn(2+) as a cofactor.

It is found in the cytoplasm. The catalysed reaction is 2 superoxide + 2 H(+) = H2O2 + O2. In terms of biological role, destroys radicals which are normally produced within the cells and which are toxic to biological systems. The sequence is that of Superoxide dismutase [Cu-Zn] (SOD1) from Cordyceps tenuipes (Entomopathogenic fungus).